A 247-amino-acid polypeptide reads, in one-letter code: MQTQVLFEHPLNEKMRTWLRIEFLIQQLTVNLPIVDHAGALHFFRNVSELLDVFERGEVRTELLKELDRQQRKLQTWIGVPGVDQSRIEALIQQLKAAGSVLISAPRIGQFLREDRLIALVRQRLSIPGGCCSFDLPTLHIWLHLPQTQRDSQVETWIASLNPLTQALTMVLDLIRQSAPFRKQTSLNGFYQDNGGDADLLRLNLSLDSQLYPQISGHKSRFAIRFMPLDSENGQVPERLDFELACC.

It belongs to the ZapD family. Interacts with FtsZ.

Its subcellular location is the cytoplasm. Functionally, cell division factor that enhances FtsZ-ring assembly. Directly interacts with FtsZ and promotes bundling of FtsZ protofilaments, with a reduction in FtsZ GTPase activity. This chain is Cell division protein ZapD, found in Escherichia coli O7:K1 (strain IAI39 / ExPEC).